Consider the following 225-residue polypeptide: Putative amino-acid transporter YggA (225 aa).

Transmembrane regions (helical) follow at residues 1-21 (MFAT…PIGA), 37-57 (LLTA…GVFG), 65-85 (SPIG…WFGI), 116-136 (LGVT…LGSF), and 150-170 (AVAM…AVVL).

The protein belongs to the LysE/ArgO transporter (TC 2.A.75) family.

It localises to the cell membrane. In Aeromonas hydrophila, this protein is Putative amino-acid transporter YggA.